The primary structure comprises 113 residues: Small ribosomal subunit protein uS17 (113 aa).

The protein belongs to the universal ribosomal protein uS17 family. As to quaternary structure, part of the 30S ribosomal subunit.

One of the primary rRNA binding proteins, it binds specifically to the 5'-end of 16S ribosomal RNA. The chain is Small ribosomal subunit protein uS17 from Pyrococcus furiosus (strain ATCC 43587 / DSM 3638 / JCM 8422 / Vc1).